Here is a 70-residue protein sequence, read N- to C-terminus: UPF0352 protein Sfri_2492 (70 aa).

Belongs to the UPF0352 family.

The polypeptide is UPF0352 protein Sfri_2492 (Shewanella frigidimarina (strain NCIMB 400)).